The chain runs to 224 residues: MAQKEEAAAATEAASQNGEDLENLDDPEKLKELIELPPFEIVTGERLPANFFKFQFRNVEYSSGRNKTFLCYVVEAQGKGGQVQASRGYLEDEHAAAHAEEAFFNTILPAFDPALRYNVTWYVSSSPCAACADRIIKTLSKTKNLRLLILVGRLFMWEELEIQDALKKLKEAGCKLRIMKPQDFEYVWQNFVEQEEGESKAFQPWEDIQENFLYYEEKLADILK.

Residues 1–25 (MAQKEEAAAATEAASQNGEDLENLD) form a disordered region. The Zn(2+) site is built by Glu-60 and His-98. The CMP/dCMP-type deaminase domain occupies 64 to 169 (GRNKTFLCYV…LEIQDALKKL (106 aa)). Catalysis depends on Glu-100, which acts as the Proton donor. Cys-128 and Cys-131 together coordinate Zn(2+).

Belongs to the cytidine and deoxycytidylate deaminase family. As to quaternary structure, homotetramer. It depends on Zn(2+) as a cofactor.

The enzyme catalyses cytidine(6666) in apoB mRNA + H2O + H(+) = uridine(6666) in apoB mRNA + NH4(+). Probable C to U editing enzyme whose physiological substrate is not yet known. Does not display detectable apoB mRNA editing. Has a low intrinsic cytidine deaminase activity. May play a role in the epigenetic regulation of gene expression through the process of active DNA demethylation. In Pongo pygmaeus (Bornean orangutan), this protein is Probable C-&gt;U-editing enzyme APOBEC-2 (APOBEC2).